The sequence spans 139 residues: MRTLWILAVLLVGVEGHLLQFETMIIKMTKQTGLFSYSFYGCYCGWGGHGRPQDPTDRCCFVHDCCYGKVTNCDPKAAAYSYTIENGGIVCGGDDPCKKQICECDRAAAMCFRDNLDTYNYAKYWKFSAKDCQEESDPC.

Residues 1–16 (MRTLWILAVLLVGVEG) form the signal peptide. Intrachain disulfides connect cysteine 42–cysteine 132, cysteine 44–cysteine 60, cysteine 59–cysteine 111, cysteine 65–cysteine 139, cysteine 66–cysteine 104, cysteine 73–cysteine 97, and cysteine 91–cysteine 102. 3 residues coordinate Ca(2+): tyrosine 43, glycine 45, and glycine 47. The active site involves histidine 63. Aspartate 64 contacts Ca(2+). The active site involves aspartate 105.

Ca(2+) is required as a cofactor. Expressed by the venom gland.

It localises to the secreted. It carries out the reaction a 1,2-diacyl-sn-glycero-3-phosphocholine + H2O = a 1-acyl-sn-glycero-3-phosphocholine + a fatty acid + H(+). PLA2 catalyzes the calcium-dependent hydrolysis of the 2-acyl groups in 3-sn-phosphoglycerides. This is Acidic phospholipase A2 Ts-A4 from Trimeresurus stejnegeri (Chinese green tree viper).